Consider the following 65-residue polypeptide: Beta-defensin 106A (65 aa).

The signal sequence occupies residues 1-20 (MRTFLFLFVVLFFLTPAKNA). 3 cysteine pairs are disulfide-bonded: cysteine 26/cysteine 53, cysteine 33/cysteine 47, and cysteine 37/cysteine 54.

It belongs to the beta-defensin family. As to quaternary structure, monomer. Interacts with CCR2 (via extracellular N-terminal region); this interaction may preferentially require specific tyrosine sulfation on CCR2.

Its subcellular location is the secreted. It localises to the membrane. Its function is as follows. Has antibacterial activity. Acts as a ligand for C-C chemokine receptor CCR2. In Hylobates lar (Lar gibbon), this protein is Beta-defensin 106A (DEFB106A).